The chain runs to 264 residues: Thymidylate synthase 2 (264 aa).

R21 lines the dUMP pocket. Residue H51 coordinates (6R)-5,10-methylene-5,6,7,8-tetrahydrofolate. A dUMP-binding site is contributed by R126–R127. The active-site Nucleophile is C146. Residues R166–D169, N177, and H207–Y209 contribute to the dUMP site. Residue D169 participates in (6R)-5,10-methylene-5,6,7,8-tetrahydrofolate binding. Residue S263 participates in (6R)-5,10-methylene-5,6,7,8-tetrahydrofolate binding.

It belongs to the thymidylate synthase family. Bacterial-type ThyA subfamily. In terms of assembly, homodimer.

The protein localises to the cytoplasm. It catalyses the reaction dUMP + (6R)-5,10-methylene-5,6,7,8-tetrahydrofolate = 7,8-dihydrofolate + dTMP. It participates in pyrimidine metabolism; dTTP biosynthesis. Its function is as follows. Catalyzes the reductive methylation of 2'-deoxyuridine-5'-monophosphate (dUMP) to 2'-deoxythymidine-5'-monophosphate (dTMP) while utilizing 5,10-methylenetetrahydrofolate (mTHF) as the methyl donor and reductant in the reaction, yielding dihydrofolate (DHF) as a by-product. This enzymatic reaction provides an intracellular de novo source of dTMP, an essential precursor for DNA biosynthesis. This chain is Thymidylate synthase 2, found in Bacillus amyloliquefaciens (Bacillus velezensis).